Consider the following 154-residue polypeptide: Prefoldin subunit alpha (154 aa).

This sequence belongs to the prefoldin alpha subunit family. As to quaternary structure, heterohexamer of two alpha and four beta subunits.

The protein resides in the cytoplasm. Functionally, molecular chaperone capable of stabilizing a range of proteins. Seems to fulfill an ATP-independent, HSP70-like function in archaeal de novo protein folding. The polypeptide is Prefoldin subunit alpha (Hyperthermus butylicus (strain DSM 5456 / JCM 9403 / PLM1-5)).